A 274-amino-acid chain; its full sequence is Kit ligand (274 aa).

The signal sequence occupies residues 1-25; the sequence is MKKTQTWIITCIYLQLLLFNPLVHT. A Pyrrolidone carboxylic acid modification is found at glutamine 26. At 26–215 the chain is on the extracellular side; that stretch reads QGICSNRVTD…SNSIEDSSLQ (190 aa). 2 disulfide bridges follow: cysteine 29–cysteine 114 and cysteine 68–cysteine 164. Asparagine 90, asparagine 145, and asparagine 196 each carry an N-linked (GlcNAc...) asparagine glycan. Residues 216–238 traverse the membrane as a helical segment; the sequence is WAAVALPAFFSLVIGFAFGAFYW. The Cytoplasmic portion of the chain corresponds to 239–274; that stretch reads KKKQPNLTRTVENRQINEEDNEISMLQEKEREFQEV.

It belongs to the SCF family. In terms of assembly, homodimer, non-covalently linked. Post-translationally, a soluble form is produced by proteolytic processing of isoform 1 in the extracellular domain.

It localises to the cell membrane. It is found in the cytoplasm. Its subcellular location is the cytoskeleton. The protein resides in the cell projection. The protein localises to the lamellipodium. It localises to the filopodium. It is found in the secreted. In terms of biological role, stimulates the proliferation of mast cells. Able to augment the proliferation of both myeloid and lymphoid hematopoietic progenitors in bone marrow culture. Also mediates cell-cell adhesion. Acts synergistically with other cytokines, probably interleukins. This Bos taurus (Bovine) protein is Kit ligand (KITLG).